Here is a 697-residue protein sequence, read N- to C-terminus: Elongation factor G 2 (697 aa).

Residues 5-280 (SKYRNIGIFA…AVVDYLPAPD (276 aa)) form the tr-type G domain. Residues 14–21 (AHVDAGKT), 78–82 (DTPGH), and 132–135 (NKLD) contribute to the GTP site.

The protein belongs to the TRAFAC class translation factor GTPase superfamily. Classic translation factor GTPase family. EF-G/EF-2 subfamily.

The protein resides in the cytoplasm. Functionally, catalyzes the GTP-dependent ribosomal translocation step during translation elongation. During this step, the ribosome changes from the pre-translocational (PRE) to the post-translocational (POST) state as the newly formed A-site-bound peptidyl-tRNA and P-site-bound deacylated tRNA move to the P and E sites, respectively. Catalyzes the coordinated movement of the two tRNA molecules, the mRNA and conformational changes in the ribosome. This Shewanella denitrificans (strain OS217 / ATCC BAA-1090 / DSM 15013) protein is Elongation factor G 2.